Reading from the N-terminus, the 100-residue chain is Aspartyl/glutamyl-tRNA(Asn/Gln) amidotransferase subunit C (100 aa).

Belongs to the GatC family. In terms of assembly, heterotrimer of A, B and C subunits.

The catalysed reaction is L-glutamyl-tRNA(Gln) + L-glutamine + ATP + H2O = L-glutaminyl-tRNA(Gln) + L-glutamate + ADP + phosphate + H(+). It catalyses the reaction L-aspartyl-tRNA(Asn) + L-glutamine + ATP + H2O = L-asparaginyl-tRNA(Asn) + L-glutamate + ADP + phosphate + 2 H(+). Its function is as follows. Allows the formation of correctly charged Asn-tRNA(Asn) or Gln-tRNA(Gln) through the transamidation of misacylated Asp-tRNA(Asn) or Glu-tRNA(Gln) in organisms which lack either or both of asparaginyl-tRNA or glutaminyl-tRNA synthetases. The reaction takes place in the presence of glutamine and ATP through an activated phospho-Asp-tRNA(Asn) or phospho-Glu-tRNA(Gln). This is Aspartyl/glutamyl-tRNA(Asn/Gln) amidotransferase subunit C from Rickettsia peacockii (strain Rustic).